A 342-amino-acid chain; its full sequence is Phosphoribosylformylglycinamidine cyclo-ligase (342 aa).

The protein belongs to the AIR synthase family.

It localises to the cytoplasm. It catalyses the reaction 2-formamido-N(1)-(5-O-phospho-beta-D-ribosyl)acetamidine + ATP = 5-amino-1-(5-phospho-beta-D-ribosyl)imidazole + ADP + phosphate + H(+). It functions in the pathway purine metabolism; IMP biosynthesis via de novo pathway; 5-amino-1-(5-phospho-D-ribosyl)imidazole from N(2)-formyl-N(1)-(5-phospho-D-ribosyl)glycinamide: step 2/2. This chain is Phosphoribosylformylglycinamidine cyclo-ligase, found in Staphylococcus aureus (strain Mu3 / ATCC 700698).